A 323-amino-acid chain; its full sequence is Olfactory receptor 2AE1 (323 aa).

Over 1 to 25 (MWQKNQTSLADFILEGLFDDSLTHL) the chain is Extracellular. The N-linked (GlcNAc...) asparagine glycan is linked to Asn5. Residues 26-49 (FLFSLTMVVFLIAVSGNTLTILLI) form a helical membrane-spanning segment. The Cytoplasmic segment spans residues 50–57 (CIDPQLHT). A helical membrane pass occupies residues 58-79 (PMYFLLSQLSLMDLMHVSTIIL). Residues 80–100 (KMATNYLSGKKSISFVGCATQ) lie on the Extracellular side of the membrane. A disulfide bond links Cys97 and Cys189. A helical membrane pass occupies residues 101-120 (HFLYLCLGGAECFLLAVMSY). The Cytoplasmic portion of the chain corresponds to 121 to 139 (DRYVAICHPLRYAVLMNKK). Residues 140-158 (VGLMMAVMSWLGASVNSLI) form a helical membrane-spanning segment. Topologically, residues 159 to 195 (HMAILMHFPFCGPRKVYHFYCEFPAVVKLVCGDITVY) are extracellular. The helical transmembrane segment at 196-218 (ETTVYISSILLLLPIFLISTSYV) threads the bilayer. The Cytoplasmic segment spans residues 219-235 (FILQSVIQMRSSGSKRN). The helical transmembrane segment at 236 to 258 (AFATCGSHLTVVSLWFGACIFSY) threads the bilayer. Over 259–271 (MRPRSQCTLLQNK) the chain is Extracellular. Residues 272 to 291 (VGSVFYSIITPTLNSLIYTL) form a helical membrane-spanning segment. The Cytoplasmic portion of the chain corresponds to 292–323 (RNKDVAKALRRVLRRDVITQCIQRLQLWLPRV).

The protein belongs to the G-protein coupled receptor 1 family.

It localises to the cell membrane. In terms of biological role, odorant receptor. In Homo sapiens (Human), this protein is Olfactory receptor 2AE1 (OR2AE1).